A 409-amino-acid polypeptide reads, in one-letter code: Tryptophan synthase beta chain (409 aa).

The residue at position 95 (Lys95) is an N6-(pyridoxal phosphate)lysine.

It belongs to the TrpB family. In terms of assembly, tetramer of two alpha and two beta chains. Pyridoxal 5'-phosphate serves as cofactor.

It carries out the reaction (1S,2R)-1-C-(indol-3-yl)glycerol 3-phosphate + L-serine = D-glyceraldehyde 3-phosphate + L-tryptophan + H2O. It participates in amino-acid biosynthesis; L-tryptophan biosynthesis; L-tryptophan from chorismate: step 5/5. Its function is as follows. The beta subunit is responsible for the synthesis of L-tryptophan from indole and L-serine. The polypeptide is Tryptophan synthase beta chain (Pseudomonas syringae pv. syringae (strain B728a)).